A 614-amino-acid polypeptide reads, in one-letter code: Glutamine--fructose-6-phosphate aminotransferase [isomerizing] (614 aa).

The active-site Nucleophile; for GATase activity is the Cys2. The Glutamine amidotransferase type-2 domain occupies 2 to 223; it reads CGIIGYIGRR…DGEMAVVTRD (222 aa). 2 consecutive SIS domains span residues 292–431 and 463–604; these read YLDR…GRTI and IAVK…VDRP. Lys609 (for Fru-6P isomerization activity) is an active-site residue.

In terms of assembly, homodimer.

It is found in the cytoplasm. The catalysed reaction is D-fructose 6-phosphate + L-glutamine = D-glucosamine 6-phosphate + L-glutamate. In terms of biological role, catalyzes the first step in hexosamine metabolism, converting fructose-6P into glucosamine-6P using glutamine as a nitrogen source. The sequence is that of Glutamine--fructose-6-phosphate aminotransferase [isomerizing] from Chlorobaculum tepidum (strain ATCC 49652 / DSM 12025 / NBRC 103806 / TLS) (Chlorobium tepidum).